Consider the following 87-residue polypeptide: Acyl-CoA-binding protein (87 aa).

The ACB domain maps to 3 to 87 (LKEEFEEHAV…KVKQLLEESA (85 aa)). An acyl-CoA is bound by residues 30 to 34 (YGLYK), lysine 56, and tyrosine 75.

The protein belongs to the ACBP family.

Its function is as follows. Binds medium- and long-chain acyl-CoA esters with very high affinity and may function as an intracellular carrier of acyl-CoA esters. In Fritillaria agrestis (Stinkbells), this protein is Acyl-CoA-binding protein (ACABP).